Consider the following 159-residue polypeptide: 6,7-dimethyl-8-ribityllumazine synthase (159 aa).

Residues Phe22, 57–59 (AVE), and 81–83 (AVI) each bind 5-amino-6-(D-ribitylamino)uracil. 86–87 (GT) serves as a coordination point for (2S)-2-hydroxy-3-oxobutyl phosphate. His89 functions as the Proton donor in the catalytic mechanism. 5-amino-6-(D-ribitylamino)uracil is bound at residue Phe114. Arg128 provides a ligand contact to (2S)-2-hydroxy-3-oxobutyl phosphate.

Belongs to the DMRL synthase family. Forms an icosahedral capsid composed of 60 subunits, arranged as a dodecamer of pentamers.

The enzyme catalyses (2S)-2-hydroxy-3-oxobutyl phosphate + 5-amino-6-(D-ribitylamino)uracil = 6,7-dimethyl-8-(1-D-ribityl)lumazine + phosphate + 2 H2O + H(+). It functions in the pathway cofactor biosynthesis; riboflavin biosynthesis; riboflavin from 2-hydroxy-3-oxobutyl phosphate and 5-amino-6-(D-ribitylamino)uracil: step 1/2. In terms of biological role, catalyzes the formation of 6,7-dimethyl-8-ribityllumazine by condensation of 5-amino-6-(D-ribitylamino)uracil with 3,4-dihydroxy-2-butanone 4-phosphate. This is the penultimate step in the biosynthesis of riboflavin. In Shewanella baltica (strain OS155 / ATCC BAA-1091), this protein is 6,7-dimethyl-8-ribityllumazine synthase.